The sequence spans 593 residues: DEAD-box ATP-dependent RNA helicase 18 (593 aa).

The Q motif signature appears at 16 to 44 (FSDLEPPLSGDIIEALNQSDFEFCTPVQA). In terms of domain architecture, Helicase ATP-binding spans 47-226 (IPLLCSYKDV…KAGLRNPVRV (180 aa)). Position 60 to 67 (60 to 67 (AATGSGKT)) interacts with ATP. Residues 174-177 (DEAD) carry the DEAD box motif. The region spanning 264–411 (QLVDLLIKNS…ERKCSEDASD (148 aa)) is the Helicase C-terminal domain. The segment covering 506–524 (QRQQNLQVRKEKRQEEKKE) has biased composition (basic and acidic residues). The tract at residues 506–561 (QRQQNLQVRKEKRQEEKKEKGKRKRVDASASNDPKKASRKLTGKQRQTIQTAEDEE) is disordered.

The protein belongs to the DEAD box helicase family. DDX55/SPB4 subfamily.

The enzyme catalyses ATP + H2O = ADP + phosphate + H(+). This is DEAD-box ATP-dependent RNA helicase 18 (RH18) from Arabidopsis thaliana (Mouse-ear cress).